Consider the following 263-residue polypeptide: Ribonuclease HII (263 aa).

The 192-residue stretch at 71 to 262 (QAIAGIDEVG…VKSMCCNSTN (192 aa)) folds into the RNase H type-2 domain. Positions 77, 78, and 172 each coordinate a divalent metal cation.

The protein belongs to the RNase HII family. Mn(2+) serves as cofactor. The cofactor is Mg(2+).

It localises to the cytoplasm. It carries out the reaction Endonucleolytic cleavage to 5'-phosphomonoester.. Functionally, endonuclease that specifically degrades the RNA of RNA-DNA hybrids. In Streptococcus pyogenes serotype M2 (strain MGAS10270), this protein is Ribonuclease HII.